The sequence spans 355 residues: Poly(3-hydroxyalkanoate) polymerase subunit PhaC (355 aa).

The AB hydrolase-1 domain maps to 69–334; the sequence is PLLIVYALVN…LAFPGGHIGI (266 aa). Residue Cys149 is part of the active site.

The protein belongs to the PHA/PHB synthase family. Type III PhaC subfamily. As to quaternary structure, a large complex of PhaC and PhaE; the ratio of the subunits has been estimated to be from 1:1 to 4:1, with more PhaE than PhaC.

Its subcellular location is the cytoplasm. The enzyme catalyses (3R)-3-hydroxybutanoyl-CoA + [(3R)-hydroxybutanoate](n) = [(3R)-hydroxybutanoate](n+1) + CoA. It participates in biopolymer metabolism; poly-(R)-3-hydroxybutanoate biosynthesis. Functionally, polymerizes D(-)-3-hydroxybutyryl-CoA to create polyhydroxybutyrate (PHB) which consists of thousands of hydroxybutyrate molecules linked end to end. This subunit has catalytic activity that is enhanced 100-fold by PhaE, the non-catalytic subunit. This chain is Poly(3-hydroxyalkanoate) polymerase subunit PhaC, found in Allochromatium vinosum (strain ATCC 17899 / DSM 180 / NBRC 103801 / NCIMB 10441 / D) (Chromatium vinosum).